We begin with the raw amino-acid sequence, 693 residues long: Glycine--tRNA ligase beta subunit (693 aa).

This sequence belongs to the class-II aminoacyl-tRNA synthetase family. Tetramer of two alpha and two beta subunits.

The protein localises to the cytoplasm. It catalyses the reaction tRNA(Gly) + glycine + ATP = glycyl-tRNA(Gly) + AMP + diphosphate. The polypeptide is Glycine--tRNA ligase beta subunit (Vibrio campbellii (strain ATCC BAA-1116)).